The following is a 265-amino-acid chain: Putative pyruvate, phosphate dikinase regulatory protein 2 (265 aa).

150-157 (GVSRTSKT) lines the ADP pocket.

This sequence belongs to the pyruvate, phosphate/water dikinase regulatory protein family. PDRP subfamily.

It catalyses the reaction N(tele)-phospho-L-histidyl/L-threonyl-[pyruvate, phosphate dikinase] + ADP = N(tele)-phospho-L-histidyl/O-phospho-L-threonyl-[pyruvate, phosphate dikinase] + AMP + H(+). The enzyme catalyses N(tele)-phospho-L-histidyl/O-phospho-L-threonyl-[pyruvate, phosphate dikinase] + phosphate + H(+) = N(tele)-phospho-L-histidyl/L-threonyl-[pyruvate, phosphate dikinase] + diphosphate. Bifunctional serine/threonine kinase and phosphorylase involved in the regulation of the pyruvate, phosphate dikinase (PPDK) by catalyzing its phosphorylation/dephosphorylation. This is Putative pyruvate, phosphate dikinase regulatory protein 2 from Latilactobacillus sakei subsp. sakei (strain 23K) (Lactobacillus sakei subsp. sakei).